The following is a 222-amino-acid chain: Putative O-methyltransferase MAP_2558 (222 aa).

Residues V49, E71, 73-74 (GT), S79, D97, and I98 contribute to the S-adenosyl-L-methionine site. D145 is a binding site for substrate. D147 serves as a coordination point for S-adenosyl-L-methionine.

Belongs to the class I-like SAM-binding methyltransferase superfamily. Cation-dependent O-methyltransferase family.

The protein is Putative O-methyltransferase MAP_2558 of Mycolicibacterium paratuberculosis (strain ATCC BAA-968 / K-10) (Mycobacterium paratuberculosis).